Consider the following 507-residue polypeptide: Arylsulfatase A (507 aa).

The N-terminal stretch at 1 to 18 (MGAPRSLLLALAAGLAVA) is a signal peptide. Asp29, Asp30, and Cys69 together coordinate Ca(2+). Residue Cys69 is the Nucleophile of the active site. Cys69 bears the 3-oxoalanine (Cys) mark. Lys123 contributes to the substrate binding site. His125 is a catalytic residue. Ser150 serves as a coordination point for substrate. Intrachain disulfides connect Cys156–Cys172 and Cys161–Cys168. Asn158 is a glycosylation site (N-linked (GlcNAc...) asparagine). Residue Asn184 is glycosylated (N-linked (GlcNAc...) asparagine). His229 is a binding site for substrate. Ca(2+) is bound by residues Asp281 and Asn282. 4 disulfide bridges follow: Cys300–Cys414, Cys488–Cys500, Cys489–Cys502, and Cys493–Cys499. Position 302 (Lys302) interacts with substrate. An N-linked (GlcNAc...) asparagine glycan is attached at Asn350.

It belongs to the sulfatase family. As to quaternary structure, homodimer at neutral pH and homooctamer at acidic pH. Exists both as a single chain of 58 kDa (component A) or as a chain of 50 kDa (component B) linked by disulfide bond(s) to a 7 kDa chain (component C). Interacts with SUMF1. Ca(2+) serves as cofactor. The conversion to 3-oxoalanine (also known as C-formylglycine, FGly), of a serine or cysteine residue in prokaryotes and of a cysteine residue in eukaryotes, is critical for catalytic activity. This post-translational modification is severely defective in multiple sulfatase deficiency (MSD).

It localises to the endoplasmic reticulum. Its subcellular location is the lysosome. It catalyses the reaction an N-acyl-1-beta-D-(3-O-sulfo)-galactosyl-sphing-4-enine + H2O = a beta-D-galactosyl-(1&lt;-&gt;1')-N-acylsphing-4-enine + sulfate + H(+). With respect to regulation, inhibited by phosphate. The phosphate forms a covalent bond with the active site 3-oxoalanine. Hydrolyzes cerebroside sulfate. This is Arylsulfatase A (ARSA) from Homo sapiens (Human).